A 95-amino-acid polypeptide reads, in one-letter code: Cell division topological specificity factor (95 aa).

It belongs to the MinE family.

Prevents the cell division inhibition by proteins MinC and MinD at internal division sites while permitting inhibition at polar sites. This ensures cell division at the proper site by restricting the formation of a division septum at the midpoint of the long axis of the cell. The sequence is that of Cell division topological specificity factor from Psychrobacter cryohalolentis (strain ATCC BAA-1226 / DSM 17306 / VKM B-2378 / K5).